Here is an 80-residue protein sequence, read N- to C-terminus: Defensin-like protein 44 (80 aa).

The signal sequence occupies residues 1-27; that stretch reads MAITKTSVTLLLLIIMAASLSNFSVLA. Cystine bridges form between cysteine 40–cysteine 79, cysteine 44–cysteine 67, cysteine 53–cysteine 77, and cysteine 57–cysteine 78.

This sequence belongs to the DEFL family.

The protein localises to the secreted. This is Defensin-like protein 44 from Arabidopsis thaliana (Mouse-ear cress).